The primary structure comprises 199 residues: MSNLENLTSKIIEDANKEAEKLLSEAKKEENEIVDEKVKKANKAKEQIIEKTKREAKTKAERVISNTHLKVRNNKLEAKQEMINKVFDEAVIKLQNLPQEEYLNFIKNSILSLDIEGDEEIIVSPNDKNKIDISFILTLNNKLKAKGKKDLLKISNENRNIKGGFILYKNGIEINNSFEALVDSLRDELEQEIIEALFS.

It belongs to the V-ATPase E subunit family.

Produces ATP from ADP in the presence of a proton gradient across the membrane. In Clostridium botulinum (strain Okra / Type B1), this protein is V-type proton ATPase subunit E.